The primary structure comprises 580 residues: Sensor histidine kinase YvrG (580 aa).

Over M1–K6 the chain is Cytoplasmic. Residues F7 to V27 traverse the membrane as a helical segment. Residues A28 to A261 lie on the Extracellular side of the membrane. The chain crosses the membrane as a helical span at residues M262–F282. The Cytoplasmic segment spans residues R283–Q580. A Histidine kinase domain is found at G363 to Q580. A Phosphohistidine; by autocatalysis modification is found at H366.

It is found in the cell membrane. The catalysed reaction is ATP + protein L-histidine = ADP + protein N-phospho-L-histidine.. In terms of biological role, member of the two-component regulatory system YvrG/YvrH that positively regulates 7 transcriptional units (wprA, wapA-yxxG, dltABCDE, sunA, sunT-bdbA-yolJ-bdbB, sigO-rsoA, and sigX-rsiX), and negatively regulates the lytABC operon. Probably activates YvrH by phosphorylation. The chain is Sensor histidine kinase YvrG (yvrG) from Bacillus subtilis (strain 168).